We begin with the raw amino-acid sequence, 1085 residues long: Voltage-dependent calcium channel subunit alpha-2/delta-3 (1085 aa).

An N-terminal signal peptide occupies residues 1–33 (MAGPGSLCCASRGASALLATALLYAALGDVVRS). Residues 34 to 1062 (EQQIPLSVVK…HPEENARECG (1029 aa)) are Extracellular-facing. An N-linked (GlcNAc...) asparagine glycan is attached at N166. Positions 256–438 (DVVILVDVSG…ENVMEYLHVL (183 aa)) constitute a VWFA domain. A divalent metal cation is bound by residues D262, S264, and S266. Residues 262 to 266 (DVSGS) carry the MIDAS-like motif motif. N309 carries an N-linked (GlcNAc...) asparagine glycan. C412 and C1049 are joined by a disulfide. The Cache domain maps to 452 to 543 (WTEAYIDSTL…RPLYEEGKKR (92 aa)). Residues N547 and N626 are each glycosylated (N-linked (GlcNAc...) asparagine). The residue at position 918 (Y918) is a Phosphotyrosine. Residues 1063–1083 (GASSLQAQVALLLLPLVSSLF) traverse the membrane as a helical segment. Topologically, residues 1084–1085 (SR) are cytoplasmic.

It belongs to the calcium channel subunit alpha-2/delta family. As to quaternary structure, dimer formed of alpha-2-2 and delta-2 chains; disulfide-linked. Voltage-dependent calcium channels are multisubunit complexes, consisting of alpha-1 (CACNA1), alpha-2 (CACNA2D), beta (CACNB) and delta (CACNA2D) subunits in a 1:1:1:1 ratio. N-glycosylated. In terms of processing, may be proteolytically processed into subunits alpha-2-3 and delta-3 that are disulfide-linked. It is however unclear whether such cleavage really takes place in vivo and has a functional role. As to expression, in heart, it is expressed in atrium but not in ventricle.

It is found in the membrane. Functionally, the alpha-2/delta subunit of voltage-dependent calcium channels regulates calcium current density and activation/inactivation kinetics of the calcium channel. Acts as a regulatory subunit for P/Q-type calcium channel (CACNA1A), N-type (CACNA1B), L-type (CACNA1C OR CACNA1D) but not T-type (CACNA1G). This Rattus norvegicus (Rat) protein is Voltage-dependent calcium channel subunit alpha-2/delta-3 (Cacna2d3).